A 72-amino-acid polypeptide reads, in one-letter code: Protein kish-A (72 aa).

Residues 1–26 (MSAIFNFQSLLTVILLLICTCAYIRS) form the signal peptide. At 27–53 (LAPSLLDKNKSGLLGIFWKCARIGERK) the chain is on the extracellular side. A glycan (N-linked (GlcNAc...) asparagine) is linked at Asn-35. Residues 54 to 71 (SPYVAVCCVVMAFSILFM) traverse the membrane as a helical segment. A topological domain (cytoplasmic) is located at residue Gln-72.

This sequence belongs to the KISH family.

It localises to the golgi apparatus membrane. Its function is as follows. Involved in the early part of the secretory pathway. The sequence is that of Protein kish-A (TMEM167A) from Taeniopygia guttata (Zebra finch).